The chain runs to 355 residues: Anthranilate phosphoribosyltransferase (355 aa).

5-phospho-alpha-D-ribose 1-diphosphate is bound by residues Gly91, 94–95, Thr99, 101–104, 119–127, and Ala131; these read GD, NIST, and KHGNRAMSS. Gly91 lines the anthranilate pocket. Ser103 contributes to the Mg(2+) binding site. Asn122 contacts anthranilate. Arg177 contacts anthranilate. 2 residues coordinate Mg(2+): Asp234 and Glu235.

The protein belongs to the anthranilate phosphoribosyltransferase family. Homodimer. Requires Mg(2+) as cofactor.

It catalyses the reaction N-(5-phospho-beta-D-ribosyl)anthranilate + diphosphate = 5-phospho-alpha-D-ribose 1-diphosphate + anthranilate. It functions in the pathway amino-acid biosynthesis; L-tryptophan biosynthesis; L-tryptophan from chorismate: step 2/5. Functionally, participates in the tryptophan-dependent indole-3-acetic acid production, which is a phytohormone released by A.brasilense. Catalyzes the transfer of the phosphoribosyl group of 5-phosphorylribose-1-pyrophosphate (PRPP) to anthranilate to yield N-(5'-phosphoribosyl)-anthranilate (PRA). The chain is Anthranilate phosphoribosyltransferase from Azospirillum brasilense.